The following is a 60-amino-acid chain: Phospholipase A2 (60 aa).

The Ca(2+) site is built by Tyr-27, Gly-29, and Gly-31. A disulfide bridge connects residues Cys-28 and Cys-44. The active site involves His-47. Ca(2+) is bound at residue Asp-48.

Requires Ca(2+) as cofactor. Expressed by the venom gland.

It localises to the secreted. It catalyses the reaction a 1,2-diacyl-sn-glycero-3-phosphocholine + H2O = a 1-acyl-sn-glycero-3-phosphocholine + a fatty acid + H(+). Its function is as follows. Snake venom phospholipase A2 (PLA2) that displays mild but significant inhibition of mouse platelet aggregation induced by ADP and collagen. In vivo, induces edema in the foot pads and gastrocnemius muscles of mice but shows no myonecrotic or myotoxic activity. PA2 catalyzes the calcium-dependent hydrolysis of the 2-acyl groups in 3-sn-phosphoglycerides. This Lachesis muta rhombeata (Bushmaster) protein is Phospholipase A2.